Here is a 620-residue protein sequence, read N- to C-terminus: Long-chain fatty acid transport protein 2 (620 aa).

Topologically, residues 1 to 4 (MLSA) are lumenal. A helical membrane pass occupies residues 5–27 (IYTVLAGLLFLPLLVNLCCPYFF). The Cytoplasmic segment spans residues 28-106 (QDIGYFLKVA…DHLGLRQGDC (79 aa)). A helical membrane pass occupies residues 107 to 127 (VALLMGNEPAYVWLWLGLVKL). Residues 128-261 (GCAMACLNYN…SGLKADDVIY (134 aa)) lie on the Lumenal side of the membrane. Residue 222–233 (YIYTSGTTGLPK) coordinates AMP. The chain crosses the membrane as a helical span at residues 262–282 (ITLPFYHSAALLIGIHGCIVA). The Cytoplasmic portion of the chain corresponds to 283-620 (GATLALRTKF…NAISAKTLKL (338 aa)). At K291 the chain carries N6-acetyllysine. A Phosphothreonine modification is found at T577.

It belongs to the ATP-dependent AMP-binding enzyme family. As to expression, expressed in liver, kidney, placenta, intestine, brain, heart, and colon. Predominantly expressed in liver. In terms of tissue distribution, expressed in liver, placenta, and intestine, but much lower relative to isoform 1.

The protein resides in the endoplasmic reticulum membrane. It is found in the peroxisome membrane. It localises to the cell membrane. The protein localises to the microsome. It carries out the reaction a fatty acid(in) = a fatty acid(out). It catalyses the reaction (9Z)-octadecenoate(out) = (9Z)-octadecenoate(in). The catalysed reaction is a long-chain fatty acid + ATP + CoA = a long-chain fatty acyl-CoA + AMP + diphosphate. The enzyme catalyses (5Z,8Z,11Z,14Z)-eicosatetraenoate + ATP + CoA = (5Z,8Z,11Z,14Z)-eicosatetraenoyl-CoA + AMP + diphosphate. It carries out the reaction hexadecanoate + ATP + CoA = hexadecanoyl-CoA + AMP + diphosphate. It catalyses the reaction (9Z)-octadecenoate + ATP + CoA = (9Z)-octadecenoyl-CoA + AMP + diphosphate. The catalysed reaction is 3,7,11,15-tetramethylhexadecanoate + ATP + CoA = phytanoyl-CoA + AMP + diphosphate. The enzyme catalyses (9Z,12Z,15Z)-octadecatrienoate + ATP + CoA = (9Z,12Z,15Z)-octadecatrienoyl-CoA + AMP + diphosphate. It carries out the reaction 2,6,10,14-tetramethylpentadecanoate + ATP + CoA = pristanoyl-CoA + AMP + diphosphate. It catalyses the reaction (E)-hexadec-2-enoate + ATP + CoA = (2E)-hexadecenoyl-CoA + AMP + diphosphate. The catalysed reaction is a very long-chain fatty acid + ATP + CoA = a very long-chain fatty acyl-CoA + AMP + diphosphate. The enzyme catalyses tetracosanoate + ATP + CoA = tetracosanoyl-CoA + AMP + diphosphate. It carries out the reaction (4Z,7Z,10Z,13Z,16Z,19Z)-docosahexaenoate + ATP + CoA = (4Z,7Z,10Z,13Z,16Z,19Z)-docosahexaenoyl-CoA + AMP + diphosphate. It catalyses the reaction (25R)-3alpha,7alpha,12alpha-trihydroxy-5beta-cholestan-26-oate + ATP + CoA = (25R)-3alpha,7alpha,12alpha-trihydroxy-5beta-cholestan-26-oyl-CoA + AMP + diphosphate. Functionally, mediates the import of long-chain fatty acids (LCFA) into the cell by facilitating their transport across cell membranes, playing an important role in hepatic fatty acid uptake. Also functions as an acyl-CoA ligase catalyzing the ATP-dependent formation of fatty acyl-CoA using LCFA and very-long-chain fatty acids (VLCFA) as substrates, which prevents fatty acid efflux from cells and might drive more fatty acid uptake. Plays a pivotal role in regulating available LCFA substrates from exogenous sources in tissues undergoing high levels of beta-oxidation or triglyceride synthesis. Can also activate branched-chain fatty acids such as phytanic acid and pristanic acid. May contribute to the synthesis of sphingosine-1-phosphate. Does not activate C24 bile acids, cholate and chenodeoxycholate. In vitro, activates 3-alpha,7-alpha,12-alpha-trihydroxy-5-beta-cholestanate (THCA), the C27 precursor of cholic acid deriving from the de novo synthesis from cholesterol. However, it is not critical for THCA activation and bile synthesis in vivo. Exhibits both long-chain fatty acids (LCFA) transport activity and acyl CoA synthetase towards very long-chain fatty acids. Shows a preference for generating CoA derivatives of n-3 fatty acids, which are preferentially trafficked into phosphatidylinositol. Its function is as follows. Exhibits long-chain fatty acids (LCFA) transport activity but lacks acyl CoA synthetase towards very long-chain fatty acids. This Homo sapiens (Human) protein is Long-chain fatty acid transport protein 2 (SLC27A2).